The chain runs to 317 residues: Olfactory receptor 10AD1 (317 aa).

Topologically, residues 1–25 (MLRNGSIVTEFILVGFQQSSTSTRA) are extracellular. The N-linked (GlcNAc...) asparagine glycan is linked to N4. Residues 26 to 46 (LLFALFLALYSLTMAMNGLII) traverse the membrane as a helical segment. Residues 47–55 (FITSWTDPK) are Cytoplasmic-facing. Residues 56 to 76 (LNSPMYFFLGHLSLLDVCFIT) form a helical membrane-spanning segment. Over 77 to 100 (TTIPQMLIHLVVRDHIVSFVCCMT) the chain is Extracellular. C98 and C190 are oxidised to a cystine. Residues 101–121 (QMYFVFCVGVAECILLAFMAY) traverse the membrane as a helical segment. Residues 122–140 (DRYVAICYPLNYVPIISQK) lie on the Cytoplasmic side of the membrane. The chain crosses the membrane as a helical span at residues 141–161 (VCVRLVGTAWFFGLINGIFLE). The Extracellular portion of the chain corresponds to 162-198 (YISFREPFRRDNHIESFFCEAPIVIGLSCGDPQFSLW). The helical transmembrane segment at 199-218 (AIFADAIVVILSPMVLTVTS) threads the bilayer. Over 219–238 (YVHILATILSKASSSGRGKT) the chain is Cytoplasmic. The helical transmembrane segment at 239–259 (FSTCASHLTVVIFLYTSAMFS) threads the bilayer. Over 260 to 272 (YMNPHSTHGPDKD) the chain is Extracellular. A helical transmembrane segment spans residues 273–293 (KPFSLLYTIITPMCNPIIYSF). At 294 to 317 (RNKEIKEAMVRALGRTRLAQPQSV) the chain is on the cytoplasmic side.

This sequence belongs to the G-protein coupled receptor 1 family.

Its subcellular location is the cell membrane. In terms of biological role, odorant receptor. This is Olfactory receptor 10AD1 (OR10AD1) from Homo sapiens (Human).